A 419-amino-acid polypeptide reads, in one-letter code: Dual specificity mitogen-activated protein kinase kinase 7 (419 aa).

A2 bears the N-acetylalanine mark. The stretch at 2–30 (AASSLEQKLSRLEAKLKQENREARRRIDL) forms a coiled coil. A compositionally biased stretch (basic and acidic residues) spans 18-30 (KQENREARRRIDL). Residues 18–76 (KQENREARRRIDLNLDISPQRPRPTLQLPLANDGGSRSPSSESSPQHPTPPARPRHMLG) form a disordered region. Over residues 36–63 (PQRPRPTLQLPLANDGGSRSPSSESSPQ) the composition is skewed to low complexity. Residues 37–57 (QRPRPTLQLPLANDGGSRSPS) are d domain. One can recognise a Protein kinase domain in the interval 120–380 (LENLGEMGSG…YNKLLEHSFI (261 aa)). Residues 126–134 (MGSGTCGQV) and K149 contribute to the ATP site. Catalysis depends on D243, which acts as the Proton acceptor. Residue S271 is modified to Phosphoserine; by MAP3K. T275 carries the post-translational modification Phosphothreonine; by MAP3K. The tract at residues 377 to 400 (HSFIKRYETLEVDVASWFKDVMAK) is DVD domain. The residue at position 411 (S411) is a Phosphoserine.

This sequence belongs to the protein kinase superfamily. STE Ser/Thr protein kinase family. MAP kinase kinase subfamily. Interacts with isoform 1 of VRK2. Interacts (via its D domain) with its substrates MAPK8/JNK1, MAPK9/JNK2 and MAPK10/JNK3. Interacts (via its DVD domain) with MAP3Ks activators like MAP3K5/ASK1 and MAP3K1/MEKK1. Interacts with MAPK8IP1/JIP1, MAPK8IP2/JIP2 and MAPK8IP3/JIP3 scaffold proteins. Interacts with RASSF7, the interaction promotes phosphorylation. Found in a complex with SH3RF1, RAC1, MAP3K11/MLK3, MAPK8IP1/JIP1 and MAPK8/JNK1. Found in a complex with SH3RF1, RAC2, MAP3K7/TAK1, MAPK8IP1/JIP1, MAPK8/JNK1 and MAPK9/JNK2. Mg(2+) is required as a cofactor. In terms of processing, activated by phosphorylation on Ser-271 and Thr-275 by MAP kinase kinase kinases (MAP3Ks). As to expression, ubiquitous; with highest level of expression in skeletal muscle. Isoform 3 is found at low levels in placenta, fetal liver, and skeletal muscle.

The protein resides in the nucleus. It localises to the cytoplasm. It catalyses the reaction L-seryl-[protein] + ATP = O-phospho-L-seryl-[protein] + ADP + H(+). The enzyme catalyses L-threonyl-[protein] + ATP = O-phospho-L-threonyl-[protein] + ADP + H(+). The catalysed reaction is L-tyrosyl-[protein] + ATP = O-phospho-L-tyrosyl-[protein] + ADP + H(+). Activated by phosphorylation by specific MAP kinase kinase kinases such as MAP3K1/MEKK1, MAP3K3/MEKK3, MAP3K11/MLK3 and MAP3K12/DLK. Its function is as follows. Dual specificity protein kinase which acts as an essential component of the MAP kinase signal transduction pathway. Essential component of the stress-activated protein kinase/c-Jun N-terminal kinase (SAP/JNK) signaling pathway. With MAP2K4/MKK4, is the one of the only known kinase to directly activate the stress-activated protein kinase/c-Jun N-terminal kinases MAPK8/JNK1, MAPK9/JNK2 and MAPK10/JNK3. MAP2K4/MKK4 and MAP2K7/MKK7 both activate the JNKs by phosphorylation, but they differ in their preference for the phosphorylation site in the Thr-Pro-Tyr motif. MAP2K4/MKK4 shows preference for phosphorylation of the Tyr residue and MAP2K7/MKK7 for the Thr residue. The monophosphorylation of JNKs on the Thr residue is sufficient to increase JNK activity indicating that MAP2K7/MKK7 is important to trigger JNK activity, while the additional phosphorylation of the Tyr residue by MAP2K4/MKK4 ensures optimal JNK activation. Has a specific role in JNK signal transduction pathway activated by pro-inflammatory cytokines. The MKK/JNK signaling pathway is also involved in mitochondrial death signaling pathway, including the release cytochrome c, leading to apoptosis. Part of a non-canonical MAPK signaling pathway, composed of the upstream MAP3K12 kinase and downstream MAP kinases MAPK1/ERK2 and MAPK3/ERK1, that enhances the AP-1-mediated transcription of APP in response to APOE. The chain is Dual specificity mitogen-activated protein kinase kinase 7 (MAP2K7) from Homo sapiens (Human).